The primary structure comprises 153 residues: Putative ubiquitin-conjugating enzyme E2 N-like (153 aa).

Residues 3 to 150 (ELPHRIIKET…ARAWTRLYAM (148 aa)) enclose the UBC core domain. Residue lysine 83 is modified to N6-acetyllysine.

It belongs to the ubiquitin-conjugating enzyme family. Expressed in epididymis (at protein level).

This Homo sapiens (Human) protein is Putative ubiquitin-conjugating enzyme E2 N-like (UBE2NL).